The following is a 473-amino-acid chain: Bifunctional protein HldE (473 aa).

Positions 1–318 (MKLSMPRFDQ…RAIQREEGSE (318 aa)) are ribokinase. ATP is bound at residue 194–197 (NLSE). Asp263 is a catalytic residue. The cytidylyltransferase stretch occupies residues 343 to 473 (FTNGCFDILH…TAIVEKIRKH (131 aa)).

In the N-terminal section; belongs to the carbohydrate kinase PfkB family. The protein in the C-terminal section; belongs to the cytidylyltransferase family. As to quaternary structure, homodimer.

It catalyses the reaction D-glycero-beta-D-manno-heptose 7-phosphate + ATP = D-glycero-beta-D-manno-heptose 1,7-bisphosphate + ADP + H(+). The enzyme catalyses D-glycero-beta-D-manno-heptose 1-phosphate + ATP + H(+) = ADP-D-glycero-beta-D-manno-heptose + diphosphate. Its pathway is nucleotide-sugar biosynthesis; ADP-L-glycero-beta-D-manno-heptose biosynthesis; ADP-L-glycero-beta-D-manno-heptose from D-glycero-beta-D-manno-heptose 7-phosphate: step 1/4. The protein operates within nucleotide-sugar biosynthesis; ADP-L-glycero-beta-D-manno-heptose biosynthesis; ADP-L-glycero-beta-D-manno-heptose from D-glycero-beta-D-manno-heptose 7-phosphate: step 3/4. In terms of biological role, catalyzes the phosphorylation of D-glycero-D-manno-heptose 7-phosphate at the C-1 position to selectively form D-glycero-beta-D-manno-heptose-1,7-bisphosphate. Catalyzes the ADP transfer from ATP to D-glycero-beta-D-manno-heptose 1-phosphate, yielding ADP-D-glycero-beta-D-manno-heptose. The polypeptide is Bifunctional protein HldE (Pseudomonas entomophila (strain L48)).